The sequence spans 261 residues: Putative hydro-lyase Nther_1142 (261 aa).

It belongs to the D-glutamate cyclase family.

The chain is Putative hydro-lyase Nther_1142 from Natranaerobius thermophilus (strain ATCC BAA-1301 / DSM 18059 / JW/NM-WN-LF).